The primary structure comprises 1167 residues: Putative structural protein VP3 (1167 aa).

The protein is Putative structural protein VP3 (S3) of Fiji disease virus (isolate Sugarcane) (FDV).